The sequence spans 407 residues: MTGRICILVMDSFGIGASLDAARYGDAGANTLVHIYEACKRGECDIEGARKGPLMLPNLAGKGLYHAAMASSGLPFIDLATLAIPSGYYGYAVEQSLGKDTPSGHWEMAGVPVTFEWGYFPDKPYCFPEELISEFIKQCNLPGVLGEKHASGTIIMDELGEEHIRTGKPIVYTSADSVFQIAAHEEAFGLQRLYDICKIARNLVDKYQIGRVIARPFTGKPGSFKRTGNRKDYATPPPEKTLLDFLKEDGREVIAIGKIADIYAHQGVTQEIKADGNMALFDATLSAMKTAPQGSLVFTNFVDFDSSYGHRRDIAGYAHALEQFDARLPELEVLLQPNDMVFIAADHGCDPTFPGSDHTREHIPVLVFGPQVNSKFIGRRDCFADIGQSIAEHLQLSSPLTHGVSFL.

Mn(2+) contacts are provided by Asp-11, Asp-305, His-310, Asp-346, His-347, and His-358.

It belongs to the phosphopentomutase family. Requires Mn(2+) as cofactor.

The protein resides in the cytoplasm. The enzyme catalyses 2-deoxy-alpha-D-ribose 1-phosphate = 2-deoxy-D-ribose 5-phosphate. The catalysed reaction is alpha-D-ribose 1-phosphate = D-ribose 5-phosphate. The protein operates within carbohydrate degradation; 2-deoxy-D-ribose 1-phosphate degradation; D-glyceraldehyde 3-phosphate and acetaldehyde from 2-deoxy-alpha-D-ribose 1-phosphate: step 1/2. Functionally, isomerase that catalyzes the conversion of deoxy-ribose 1-phosphate (dRib-1-P) and ribose 1-phosphate (Rib-1-P) to deoxy-ribose 5-phosphate (dRib-5-P) and ribose 5-phosphate (Rib-5-P), respectively. This Legionella pneumophila (strain Lens) protein is Phosphopentomutase.